The sequence spans 367 residues: Metacaspase-1 (367 aa).

The disordered stretch occupies residues 47–77 (DPRTAPPPQPSSAPSPPPQIHAPPGQLPHPH). The span at 50–73 (TAPPPQPSSAPSPPPQIHAPPGQL) shows a compositional bias: pro residues. Residues His164 and Cys220 contribute to the active site.

It belongs to the peptidase C14B family. As to quaternary structure, interacts (via N-terminus) with LSD1. In terms of processing, proteolytically processed; by an autocatalytic mechanism.

In terms of biological role, cysteine protease that cleaves specifically after arginine or lysine residues. Does not cleave caspase-specific substrates. Acts as a positive regulator of cell death. Required for both oxidative stress cell death response and hypersensitive cell death response mediated by immune response. This Arabidopsis thaliana (Mouse-ear cress) protein is Metacaspase-1 (AMC1).